Reading from the N-terminus, the 209-residue chain is Redox-sensing transcriptional repressor Rex (209 aa).

Residues 16–55 constitute a DNA-binding region (H-T-H motif); it reads LYYRFIQNLSLSGKQRVSSAELSEAVKVDSATIRRDFSYF. Position 90 to 95 (90 to 95) interacts with NAD(+); sequence GVGNLG.

The protein belongs to the transcriptional regulatory Rex family. As to quaternary structure, homodimer.

The protein resides in the cytoplasm. In terms of biological role, modulates transcription in response to changes in cellular NADH/NAD(+) redox state. The chain is Redox-sensing transcriptional repressor Rex from Bacillus thuringiensis (strain Al Hakam).